A 391-amino-acid chain; its full sequence is Saxitoxin and tetrodotoxin-binding protein 2 (391 aa).

The signal sequence occupies residues 1–20 (MGAVPGVVLLLMLAVLGIRA). Repeat copies occupy residues 24 to 202 (PEEC…HKKS) and 203 to 391 (PEEC…PEQD). Residues asparagine 41, asparagine 54, asparagine 63, asparagine 97, asparagine 234, asparagine 268, asparagine 277, and asparagine 307 are each glycosylated (N-linked (GlcNAc...) asparagine).

As to quaternary structure, homodimer or heterodimer of PSTBP1 and PSTBP2. In terms of processing, glycosylated.

It is found in the secreted. Functionally, binds both saxitoxin and tetradotoxin. May play a role in toxin accumulation and/or excretion. The sequence is that of Saxitoxin and tetrodotoxin-binding protein 2 (psbp2) from Takifugu pardalis (Panther puffer).